Here is a 341-residue protein sequence, read N- to C-terminus: Ferrochelatase (341 aa).

H189 and E293 together coordinate Fe cation.

It belongs to the ferrochelatase family.

It localises to the cytoplasm. The enzyme catalyses heme b + 2 H(+) = protoporphyrin IX + Fe(2+). It functions in the pathway porphyrin-containing compound metabolism; protoheme biosynthesis; protoheme from protoporphyrin-IX: step 1/1. In terms of biological role, catalyzes the ferrous insertion into protoporphyrin IX. This chain is Ferrochelatase, found in Pseudomonas fluorescens (strain Pf0-1).